A 92-amino-acid polypeptide reads, in one-letter code: MAKRTKKVGIVGKYGTRYGASLRKMVKKMEITQHSKYTCSFCGKDSMKRAVVGIWSCKRCKRTVAGGAWVYSTTAAASVRSAVRRLRETKEQ.

The segment at 39–60 (CSFCGKDSMKRAVVGIWSCKRC) adopts a C4-type zinc-finger fold.

The protein belongs to the eukaryotic ribosomal protein eL43 family.

This chain is Large ribosomal subunit protein eL43 (RpL37A), found in Drosophila melanogaster (Fruit fly).